The chain runs to 141 residues: Small ribosomal subunit protein bS6 (141 aa).

Residues 97–141 (TGQSEMLKAEENRSERRERRDRPEHSDSADGDDGDNSDVSDNADE) are disordered. Positions 103–124 (LKAEENRSERRERRDRPEHSDS) are enriched in basic and acidic residues. Positions 125–141 (ADGDDGDNSDVSDNADE) are enriched in acidic residues.

It belongs to the bacterial ribosomal protein bS6 family.

Binds together with bS18 to 16S ribosomal RNA. This chain is Small ribosomal subunit protein bS6, found in Pseudomonas syringae pv. syringae (strain B728a).